Reading from the N-terminus, the 290-residue chain is Ribonuclease 3 (290 aa).

Residues tyrosine 20–glycine 145 enclose the RNase III domain. Glutamate 62 is a Mg(2+) binding site. Residue aspartate 66 is part of the active site. Mg(2+) is bound by residues asparagine 131 and glutamate 134. Residue glutamate 134 is part of the active site. A DRBM domain is found at asparagine 173–glycine 242. The disordered stretch occupies residues lysine 254–valine 290. Residues glutamate 267–isoleucine 279 are compositionally biased toward polar residues.

This sequence belongs to the ribonuclease III family. In terms of assembly, homodimer. Mg(2+) serves as cofactor.

Its subcellular location is the cytoplasm. The catalysed reaction is Endonucleolytic cleavage to 5'-phosphomonoester.. Digests double-stranded RNA. Involved in the processing of primary rRNA transcript to yield the immediate precursors to the large and small rRNAs (23S and 16S). Processes some mRNAs, and tRNAs when they are encoded in the rRNA operon. Processes pre-crRNA and tracrRNA of type II CRISPR loci if present in the organism. The protein is Ribonuclease 3 of Bacteroides fragilis (strain YCH46).